The sequence spans 344 residues: Uroporphyrinogen decarboxylase (344 aa).

Residues Arg-23–Arg-27, Asp-73, Tyr-149, Thr-204, and His-321 each bind substrate.

The protein belongs to the uroporphyrinogen decarboxylase family. Homodimer.

The protein localises to the cytoplasm. The catalysed reaction is uroporphyrinogen III + 4 H(+) = coproporphyrinogen III + 4 CO2. It participates in porphyrin-containing compound metabolism; protoporphyrin-IX biosynthesis; coproporphyrinogen-III from 5-aminolevulinate: step 4/4. In terms of biological role, catalyzes the decarboxylation of four acetate groups of uroporphyrinogen-III to yield coproporphyrinogen-III. This chain is Uroporphyrinogen decarboxylase, found in Francisella philomiragia subsp. philomiragia (strain ATCC 25017 / CCUG 19701 / FSC 153 / O#319-036).